The sequence spans 511 residues: Synaptotagmin-6 (511 aa).

Over methionine 1–serine 59 the chain is Vesicular. The interval cysteine 12–arginine 38 is cysteine motif. Residues leucine 60–phenylalanine 80 traverse the membrane as a helical segment. At tryptophan 81–leucine 511 the chain is on the cytoplasmic side. 2 disordered regions span residues glutamate 92–leucine 119 and threonine 157–glutamine 182. Positions serine 94–serine 103 are enriched in low complexity. 2 stretches are compositionally biased toward polar residues: residues glutamate 104–glycine 113 and glutamine 160–histidine 172. Position 217 is a phosphoserine (serine 217). C2 domains follow at residues serine 230–lysine 351 and aspartate 362–histidine 495. Aspartate 261, aspartate 267, aspartate 319, phenylalanine 320, aspartate 321, serine 324, aspartate 327, aspartate 393, aspartate 399, aspartate 453, and aspartate 455 together coordinate Ca(2+). Residues methionine 483–leucine 511 are necessary for cell membrane association (isoform 2).

This sequence belongs to the synaptotagmin family. Isoform 1: Homodimer; disulfide-linked via the cysteine motif. Isoform 1: Can also form heterodimers with SYT3, SYT7, SYT9 and SYT10. Isoform 1: Interacts with STX1A, STX1B and STX2; the interaction is Ca(2+)-dependent. Isoform 2: Is not able to form homodimer and heterodimers. Requires Ca(2+) as cofactor. Isoform 1 is expressed in the olfactory bulb. Isoform 2 is expressed in the brain (at protein level).

Its subcellular location is the cytoplasmic vesicle. The protein resides in the secretory vesicle. It is found in the synaptic vesicle membrane. It localises to the membrane. The protein localises to the cytoplasm. Its subcellular location is the cytosol. The protein resides in the cell membrane. In terms of biological role, may be involved in Ca(2+)-dependent exocytosis of secretory vesicles through Ca(2+) and phospholipid binding to the C2 domain or may serve as Ca(2+) sensors in the process of vesicular trafficking and exocytosis. May mediate Ca(2+)-regulation of exocytosis in acrosomal reaction in sperm. The protein is Synaptotagmin-6 (Syt6) of Mus musculus (Mouse).